The chain runs to 179 residues: MNRLKEKFQKEITPALMSKFNYKSVMQVPKIEKIVINTGVGDAVSNSKALDNAVEELTQIAGQKPVVTRAKKSIAGFRLREGMPIGAKVTLRGEQMYEFFDKLVSVSLPRVRDFRGVSKKSFDGRGNYTLGVKEQLIFPEIDYDKVSKVRGMDIVIVTTANTDEEARELLTQFGMPFQK.

The protein belongs to the universal ribosomal protein uL5 family. Part of the 50S ribosomal subunit; part of the 5S rRNA/L5/L18/L25 subcomplex. Contacts the 5S rRNA and the P site tRNA. Forms a bridge to the 30S subunit in the 70S ribosome.

Functionally, this is one of the proteins that bind and probably mediate the attachment of the 5S RNA into the large ribosomal subunit, where it forms part of the central protuberance. In the 70S ribosome it contacts protein S13 of the 30S subunit (bridge B1b), connecting the 2 subunits; this bridge is implicated in subunit movement. Contacts the P site tRNA; the 5S rRNA and some of its associated proteins might help stabilize positioning of ribosome-bound tRNAs. The sequence is that of Large ribosomal subunit protein uL5 from Bacillus cereus (strain Q1).